A 563-amino-acid chain; its full sequence is MLEEAGEVLENMLKASCLPLGFIVFLPAVLLLVAPPLPAADAAHEFTVYRMQQYDLQGQPYGTRNAVLNTEARTMAAEVLSRRCVLMRLLDFSYEQYQKALRQSAGAVVIILPRAMAAVPQDVVRQFMEIEPEMLAMETAVPVYFAVEDEALLSIYKQTQAASASQGSASAAEVLLRTATANGFQMVTSGVQSKAVSDWLIASVEGRLTGLGGEDLPTIVIVAHYDAFGVAPWLSLGADSNGSGVSVLLELARLFSRLYTYKRTHAAYNLLFFASGGGKFNYQGTKRWLEDNLDHTDSSLLQDNVAFVLCLDTVGRGSSLHLHVSKPPREGTLQHAFLRELETVAAHQFPEVRFSMVHKRINLAEDVLAWEHERFAIRRLPAFTLSHLESHRDGQRSSIMDVRSRVDSKTLTRNTRIIAEALTRVIYNLTEKGTPPDMPVFTEQMQIQQEQLDSVMDWLTNQPRAAQLVDKDSTFLSTLEHHLSRYLKDVKQHHVKADKRDPEFVFYDQLKQVMNAYRVKPAVFDLLLAVGIAAYLGMAYVAVQHFSLLYKTVQRLLVKAKTQ.

A signal peptide spans 1 to 42; that stretch reads MLEEAGEVLENMLKASCLPLGFIVFLPAVLLLVAPPLPAADA. At 43–522 the chain is on the lumenal side; the sequence is AHEFTVYRMQ…VMNAYRVKPA (480 aa). Asparagine 241 and asparagine 428 each carry an N-linked (GlcNAc...) asparagine glycan. The chain crosses the membrane as a helical span at residues 523-543; sequence VFDLLLAVGIAAYLGMAYVAV. Residues 544 to 563 lie on the Cytoplasmic side of the membrane; that stretch reads QHFSLLYKTVQRLLVKAKTQ.

The protein belongs to the nicastrin family. In terms of assembly, component of the back of Sec61 (BOS) complex, composed of NCLN/Nicalin, NOMO (NOMO1, NOMO2 or NOMO3) and TMEM147. The BOS complex is part of the multi-pass translocon (MPT) complex, composed of three subcomplexes, the GEL complex (composed of RAB5IF/OPTI and TMCO1), the BOS complex (composed of NCLN/Nicalin, NOMO and TMEM147) and the PAT complex (composed of WDR83OS/Asterix and CCDC47). The MPT complex associates with the SEC61 complex. In terms of tissue distribution, highly expressed in pancreas and skeletal muscle and, at lower levels, in heart.

It localises to the endoplasmic reticulum membrane. In terms of biological role, component of the multi-pass translocon (MPT) complex that mediates insertion of multi-pass membrane proteins into the lipid bilayer of membranes. The MPT complex takes over after the SEC61 complex: following membrane insertion of the first few transmembrane segments of proteins by the SEC61 complex, the MPT complex occludes the lateral gate of the SEC61 complex to promote insertion of subsequent transmembrane regions. May antagonize Nodal signaling and subsequent organization of axial structures during mesodermal patterning, via its interaction with NOMO. In Homo sapiens (Human), this protein is BOS complex subunit NCLN.